The chain runs to 219 residues: GPI-anchored hemophore PGA7 (219 aa).

An N-terminal signal peptide occupies residues 1–13 (MHFIFYLILLVSA). The CFEM domain maps to 17–126 (GNFGTYPKVP…SMLSTAAGDA (110 aa)). 4 disulfide bridges follow: C45/C85, C49/C80, C59/C66, and C68/C101. D63 lines the heme pocket. Positions 151-194 (VVSETGSASETGSSESAQSTTTGSSSTGSSSTDSSSSSSSSPSS) are disordered. A compositionally biased stretch (low complexity) spans 153–194 (SETGSASETGSSESAQSTTTGSSSTGSSSTDSSSSSSSSPSS). S194 carries the GPI-anchor amidated serine lipid modification. A propeptide spans 195-219 (SANFAVLQTGGIGSVILGFMMYLLV) (removed in mature form).

Belongs to the RBT5 family. As to quaternary structure, interacts with RBT5. In terms of processing, the GPI-anchor is attached to the protein in the endoplasmic reticulum and serves to target the protein to the cell surface. There, the glucosamine-inositol phospholipid moiety is cleaved off and the GPI-modified mannoprotein is covalently attached via its lipidless GPI glycan remnant to the 1,6-beta-glucan of the outer cell wall layer.

Its subcellular location is the secreted. It is found in the cell wall. It localises to the cell membrane. In terms of biological role, GPI-linked hyphal surface heme-binding protein involved in heme-iron utilization. Heme transfer occurs between PGA7, RBT5 and CSA2 supporting a model in which the 3 CFEM proteins cooperate in a heme-acquisition system and form a cross-cell wall heme-transfer cascade. The ability to acquire iron from host tissues is a major virulence factor of pathogenic microorganisms. Required for biofilm formation. This chain is GPI-anchored hemophore PGA7, found in Candida albicans (strain SC5314 / ATCC MYA-2876) (Yeast).